We begin with the raw amino-acid sequence, 72 residues long: C-hordein (72 aa).

The segment covering 1 to 36 has biased composition (pro residues); sequence FPQPQEPFPQQPQQPFPLQPQQPFPQQPQQPFPQPQ. The tract at residues 1–61 is disordered; sequence FPQPQEPFPQ…QQPFPLQPHQ (61 aa). The segment covering 37-50 has biased composition (low complexity); sequence QPFRQQAELIIPQQ.

Developing endosperm.

Sulfur-poor seed storage protein. The chain is C-hordein from Hordeum vulgare (Barley).